The primary structure comprises 547 residues: Chaperonin GroEL 1 (547 aa).

ATP-binding positions include Thr-30–Pro-33, Lys-51, Asp-87–Thr-91, Gly-415, and Asp-496.

This sequence belongs to the chaperonin (HSP60) family. Forms a cylinder of 14 subunits composed of two heptameric rings stacked back-to-back. Interacts with the co-chaperonin GroES.

It localises to the cytoplasm. The catalysed reaction is ATP + H2O + a folded polypeptide = ADP + phosphate + an unfolded polypeptide.. Its function is as follows. Together with its co-chaperonin GroES, plays an essential role in assisting protein folding. The GroEL-GroES system forms a nano-cage that allows encapsulation of the non-native substrate proteins and provides a physical environment optimized to promote and accelerate protein folding. This chain is Chaperonin GroEL 1, found in Rhodopseudomonas palustris (strain BisB5).